The primary structure comprises 513 residues: Alpha,alpha-trehalose-phosphate synthase [UDP-forming] (513 aa).

Tyr-40 carries the post-translational modification Phosphotyrosine. The D-glucose 6-phosphate site is built by Tyr-104 and Asp-158. Residues Arg-294 and Lys-299 each contribute to the UDP site. 2 residues coordinate UDP-alpha-D-glucose: Arg-294 and Lys-299. Arg-332 is a D-glucose 6-phosphate binding site. UDP-alpha-D-glucose is bound at residue 393-401 (DGMNLVSYE). 397 to 401 (LVSYE) contributes to the UDP binding site. Ser-503 carries the post-translational modification Phosphoserine.

The protein belongs to the glycosyltransferase 20 family. As to quaternary structure, homomer. Component of the trehalose synthase complex that contains at least tps1, ntp1 and tpp1. Interacts with tpp1. Interacts with ntp1; the interaction is independent of stress conditions.

The protein resides in the cytoplasm. The protein localises to the nucleus. The enzyme catalyses D-glucose 6-phosphate + UDP-alpha-D-glucose = alpha,alpha-trehalose 6-phosphate + UDP + H(+). The protein operates within carbohydrate biosynthesis. Its function is as follows. Synthase catalytic subunit of the trehalose synthase complex that catalyzes the production of trehalose from glucose-6-phosphate and UDP-alpha-D-glucose in a two step process. The disaccharide trehalose serves as a storage carbohydrate that is mobilized during nutrient stress and spore germination. Together with ntp1, regulates the level of trehalose as a protectant for cell integrity during thermal and osmotic stress. The sequence is that of Alpha,alpha-trehalose-phosphate synthase [UDP-forming] from Schizosaccharomyces pombe (strain 972 / ATCC 24843) (Fission yeast).